A 75-amino-acid chain; its full sequence is Protein CYSTEINE-RICH TRANSMEMBRANE MODULE 5 (75 aa).

The interval 1–29 (MSQYSQNQYAGAYPTPPVSTGPYVAPPPL) is disordered. Over residues 14–29 (PTPPVSTGPYVAPPPL) the composition is skewed to pro residues. Residues 52 to 69 (AADGFLKGCLATMLACCV) form a helical membrane-spanning segment.

This sequence belongs to the CYSTM1 family. Heterodimers. Interacts with CYSTM7 and WIH1/CYSTM13. In terms of tissue distribution, mostly expressed in roots, stems, rosette leaves and siliques and, to a lower extent, in flowers and cauline leaves.

The protein localises to the cell membrane. The protein resides in the nucleus. Functionally, involved in resistance to abiotic stress. In Arabidopsis thaliana (Mouse-ear cress), this protein is Protein CYSTEINE-RICH TRANSMEMBRANE MODULE 5.